The primary structure comprises 167 residues: uncharacterized protein (167 aa).

The stretch at 70–118 forms a coiled coil; it reads KIVELRKAMESIITELAYIKGELKGLQEKGESKVERKEIIEEKIQKAMV. The segment covering 128-155 has biased composition (basic and acidic residues); that stretch reads EKEERKPAKESKRREHDVIIPEGKKEER. Residues 128 to 167 are disordered; it reads EKEERKPAKESKRREHDVIIPEGKKEERTDDGEDGLIVCD.

This is an uncharacterized protein from Archaeoglobus fulgidus (strain ATCC 49558 / DSM 4304 / JCM 9628 / NBRC 100126 / VC-16).